Consider the following 407-residue polypeptide: tRNA (guanine-N(7)-)-methyltransferase non-catalytic subunit wuho (407 aa).

WD repeat units follow at residues 83-124 (AIEV…ARLL), 171-210 (GHLSVVFDILWTDDQQHIITCDRDDKIRVTNYPATFDIHS), and 214-252 (GHKEFVSGLALLTEQHIVSSSGDKTLRVWNFIEGKELLI).

It belongs to the WD repeat TRM82 family. Forms a heterodimer with the catalytic subunit Mettl1. Interacts with mei-P26 and weakly interacts with bgcn; required for the function or formation of the mei-P26-bgcn-bam-sxl complex. Interacts with nanos; may be involved in mei-P26-dependent derepression of the BMP signaling pathway. Interacts with Myc; the interaction may be mediated by mei-P26 and may be involved in the regulation of ribosome biogenesis. In terms of tissue distribution, in testis, it is present at high level in hub cells, a niche for germline stem cells of testis. Ubiquitously expressed in all testicular cells throughout spermatogenesis. Ubiquitously expressed in all germline and somatic cells of the ovary.

It localises to the nucleus. The protein localises to the cytoplasm. The protein operates within tRNA modification; N(7)-methylguanine-tRNA biosynthesis. Required for the Mettl1-dependent formation of N(7)-methylguanine at position 46 (m7G46) in tRNA. In the Mettl1-wuho methyltransferase complex, it is required to stabilize and induce conformational changes of the catalytic subunit. Required for binding of nanos mRNA and repression of translation by the mei-P26-bgcn-bam-sxl complex. May cooperate with mei-P26 and nanos to derepress the BMP signaling pathway. May cooperate with mei-P26 to suppress expression of a subset of microRNAs. May cooperate with mei-P26 to regulate bam expression levels in germline cells during gametogenesis. Required to promote mitosis to meiosis transition during gametogenesis. May regulate germline cell division in part by regulating ribosome biogenesis. This chain is tRNA (guanine-N(7)-)-methyltransferase non-catalytic subunit wuho, found in Drosophila ananassae (Fruit fly).